The sequence spans 382 residues: Mannitol-1-phosphate 5-dehydrogenase (382 aa).

3-14 (AVHFGAGNIGRG) is an NAD(+) binding site.

It belongs to the mannitol dehydrogenase family.

It catalyses the reaction D-mannitol 1-phosphate + NAD(+) = beta-D-fructose 6-phosphate + NADH + H(+). In Paenarthrobacter aurescens (strain TC1), this protein is Mannitol-1-phosphate 5-dehydrogenase.